Reading from the N-terminus, the 340-residue chain is Methionine import ATP-binding protein MetN (340 aa).

Residues 6–245 enclose the ABC transporter domain; that stretch reads IEFEGITKVF…PQTNVAKRFV (240 aa). Residue 42–49 participates in ATP binding; the sequence is GYSGAGKS.

It belongs to the ABC transporter superfamily. Methionine importer (TC 3.A.1.24) family. As to quaternary structure, the complex is composed of two ATP-binding proteins (MetN), two transmembrane proteins (MetI) and a solute-binding protein (MetQ).

The protein localises to the cell membrane. The catalysed reaction is L-methionine(out) + ATP + H2O = L-methionine(in) + ADP + phosphate + H(+). It catalyses the reaction D-methionine(out) + ATP + H2O = D-methionine(in) + ADP + phosphate + H(+). In terms of biological role, part of the ABC transporter complex MetNIQ involved in methionine import. Responsible for energy coupling to the transport system. This is Methionine import ATP-binding protein MetN from Corynebacterium diphtheriae (strain ATCC 700971 / NCTC 13129 / Biotype gravis).